The chain runs to 215 residues: 3-isopropylmalate dehydratase small subunit (215 aa).

Belongs to the LeuD family. LeuD type 1 subfamily. As to quaternary structure, heterodimer of LeuC and LeuD.

The catalysed reaction is (2R,3S)-3-isopropylmalate = (2S)-2-isopropylmalate. Its pathway is amino-acid biosynthesis; L-leucine biosynthesis; L-leucine from 3-methyl-2-oxobutanoate: step 2/4. Catalyzes the isomerization between 2-isopropylmalate and 3-isopropylmalate, via the formation of 2-isopropylmaleate. This is 3-isopropylmalate dehydratase small subunit from Chromohalobacter salexigens (strain ATCC BAA-138 / DSM 3043 / CIP 106854 / NCIMB 13768 / 1H11).